We begin with the raw amino-acid sequence, 252 residues long: Ubiquinone/menaquinone biosynthesis C-methyltransferase UbiE (252 aa).

S-adenosyl-L-methionine is bound by residues T71, D100, 124–125, and S141; that span reads DA.

It belongs to the class I-like SAM-binding methyltransferase superfamily. MenG/UbiE family.

The enzyme catalyses a 2-demethylmenaquinol + S-adenosyl-L-methionine = a menaquinol + S-adenosyl-L-homocysteine + H(+). It carries out the reaction a 2-methoxy-6-(all-trans-polyprenyl)benzene-1,4-diol + S-adenosyl-L-methionine = a 5-methoxy-2-methyl-3-(all-trans-polyprenyl)benzene-1,4-diol + S-adenosyl-L-homocysteine + H(+). It functions in the pathway quinol/quinone metabolism; menaquinone biosynthesis; menaquinol from 1,4-dihydroxy-2-naphthoate: step 2/2. It participates in cofactor biosynthesis; ubiquinone biosynthesis. Its function is as follows. Methyltransferase required for the conversion of demethylmenaquinol (DMKH2) to menaquinol (MKH2) and the conversion of 2-polyprenyl-6-methoxy-1,4-benzoquinol (DDMQH2) to 2-polyprenyl-3-methyl-6-methoxy-1,4-benzoquinol (DMQH2). The polypeptide is Ubiquinone/menaquinone biosynthesis C-methyltransferase UbiE (Caulobacter vibrioides (strain ATCC 19089 / CIP 103742 / CB 15) (Caulobacter crescentus)).